The sequence spans 503 residues: UDP-N-acetylmuramate--L-alanine ligase (503 aa).

120–126 (GTHGKTS) is a binding site for ATP.

Belongs to the MurCDEF family.

Its subcellular location is the cytoplasm. It catalyses the reaction UDP-N-acetyl-alpha-D-muramate + L-alanine + ATP = UDP-N-acetyl-alpha-D-muramoyl-L-alanine + ADP + phosphate + H(+). It participates in cell wall biogenesis; peptidoglycan biosynthesis. In terms of biological role, cell wall formation. The polypeptide is UDP-N-acetylmuramate--L-alanine ligase (Rhodococcus jostii (strain RHA1)).